A 159-amino-acid chain; its full sequence is ATP synthase subunit b (159 aa).

A helical membrane pass occupies residues 2 to 22; the sequence is EFNLVTIGFTIVNFIILMLIL.

It belongs to the ATPase B chain family. F-type ATPases have 2 components, F(1) - the catalytic core - and F(0) - the membrane proton channel. F(1) has five subunits: alpha(3), beta(3), gamma(1), delta(1), epsilon(1). F(0) has three main subunits: a(1), b(2) and c(10-14). The alpha and beta chains form an alternating ring which encloses part of the gamma chain. F(1) is attached to F(0) by a central stalk formed by the gamma and epsilon chains, while a peripheral stalk is formed by the delta and b chains.

The protein resides in the cell membrane. Functionally, f(1)F(0) ATP synthase produces ATP from ADP in the presence of a proton or sodium gradient. F-type ATPases consist of two structural domains, F(1) containing the extramembraneous catalytic core and F(0) containing the membrane proton channel, linked together by a central stalk and a peripheral stalk. During catalysis, ATP synthesis in the catalytic domain of F(1) is coupled via a rotary mechanism of the central stalk subunits to proton translocation. Component of the F(0) channel, it forms part of the peripheral stalk, linking F(1) to F(0). This Clostridium acetobutylicum (strain ATCC 824 / DSM 792 / JCM 1419 / IAM 19013 / LMG 5710 / NBRC 13948 / NRRL B-527 / VKM B-1787 / 2291 / W) protein is ATP synthase subunit b.